The following is a 684-amino-acid chain: Threonine--tRNA ligase (684 aa).

The TGS domain occupies 1–66 (MSTAASPAPA…DADVEVVPVP (66 aa)). The segment at 261–567 (DHRKLGVELD…LTEHYAGAFP (307 aa)) is catalytic. Residues Cys366, His417, and His544 each contribute to the Zn(2+) site.

Belongs to the class-II aminoacyl-tRNA synthetase family. In terms of assembly, homodimer. It depends on Zn(2+) as a cofactor.

Its subcellular location is the cytoplasm. It catalyses the reaction tRNA(Thr) + L-threonine + ATP = L-threonyl-tRNA(Thr) + AMP + diphosphate + H(+). Its function is as follows. Catalyzes the attachment of threonine to tRNA(Thr) in a two-step reaction: L-threonine is first activated by ATP to form Thr-AMP and then transferred to the acceptor end of tRNA(Thr). Also edits incorrectly charged L-seryl-tRNA(Thr). This chain is Threonine--tRNA ligase, found in Mycobacterium sp. (strain KMS).